The primary structure comprises 1184 residues: Protein stu1 (1184 aa).

HEAT repeat units follow at residues 92–130 (FCPV…EHYV) and 162–194 (RSYV…FQGA). 2 stretches are compositionally biased toward basic and acidic residues: residues 229 to 240 (SSTARPRSRVEP) and 308 to 317 (EAEKAPHMET). The disordered stretch occupies residues 229 to 336 (SSTARPRSRV…APQPLHAETS (108 aa)). The stretch at 463-499 (VTYTPRLLQHVTSACQDKNAQLRLFAAGWLKTLLNKQ) is one HEAT 3 repeat. Disordered regions lie at residues 564-584 (LEKD…SDTL) and 602-906 (ARLA…RVEE). Residues 572–584 (NRDQSSYLSSDTL) are compositionally biased toward polar residues. Positions 640–649 (APLSSLSSAP) are enriched in low complexity. Residues 723–737 (SASNENETQVATQVA) show a composition bias toward polar residues. 2 stretches are compositionally biased toward basic and acidic residues: residues 787–811 (AGRH…ENKL) and 882–895 (EQDR…DSAE).

Belongs to the CLASP family. As to quaternary structure, interacts with microtubules.

The protein resides in the cytoplasm. It is found in the cytoskeleton. It localises to the nucleus. The protein localises to the spindle. Its function is as follows. Microtubule binding protein that promotes the stabilization of dynamic microtubules. Required for mitotic spindle formation. This Aspergillus oryzae (strain ATCC 42149 / RIB 40) (Yellow koji mold) protein is Protein stu1 (stu1).